Consider the following 957-residue polypeptide: Glycine dehydrogenase (decarboxylating) (957 aa).

Position 708 is an N6-(pyridoxal phosphate)lysine (lysine 708).

It belongs to the GcvP family. As to quaternary structure, the glycine cleavage system is composed of four proteins: P, T, L and H. Pyridoxal 5'-phosphate is required as a cofactor.

The enzyme catalyses N(6)-[(R)-lipoyl]-L-lysyl-[glycine-cleavage complex H protein] + glycine + H(+) = N(6)-[(R)-S(8)-aminomethyldihydrolipoyl]-L-lysyl-[glycine-cleavage complex H protein] + CO2. Its function is as follows. The glycine cleavage system catalyzes the degradation of glycine. The P protein binds the alpha-amino group of glycine through its pyridoxal phosphate cofactor; CO(2) is released and the remaining methylamine moiety is then transferred to the lipoamide cofactor of the H protein. The protein is Glycine dehydrogenase (decarboxylating) of Salmonella agona (strain SL483).